A 184-amino-acid polypeptide reads, in one-letter code: ATP-dependent protease subunit HslV (184 aa).

Residue Thr-2 is part of the active site. Residues Gly-157, Cys-160, and Thr-163 each coordinate Na(+).

This sequence belongs to the peptidase T1B family. HslV subfamily. As to quaternary structure, a double ring-shaped homohexamer of HslV is capped on each side by a ring-shaped HslU homohexamer. The assembly of the HslU/HslV complex is dependent on binding of ATP.

It localises to the cytoplasm. It carries out the reaction ATP-dependent cleavage of peptide bonds with broad specificity.. Its activity is regulated as follows. Allosterically activated by HslU binding. Functionally, protease subunit of a proteasome-like degradation complex believed to be a general protein degrading machinery. In Vibrio vulnificus (strain CMCP6), this protein is ATP-dependent protease subunit HslV.